Consider the following 292-residue polypeptide: Ribosomal protein L11 methyltransferase (292 aa).

T144, G165, D187, and N229 together coordinate S-adenosyl-L-methionine.

The protein belongs to the methyltransferase superfamily. PrmA family.

It localises to the cytoplasm. The enzyme catalyses L-lysyl-[protein] + 3 S-adenosyl-L-methionine = N(6),N(6),N(6)-trimethyl-L-lysyl-[protein] + 3 S-adenosyl-L-homocysteine + 3 H(+). In terms of biological role, methylates ribosomal protein L11. This is Ribosomal protein L11 methyltransferase from Pseudomonas putida (strain ATCC 700007 / DSM 6899 / JCM 31910 / BCRC 17059 / LMG 24140 / F1).